Reading from the N-terminus, the 245-residue chain is tRNA pseudouridine synthase A (245 aa).

D52 acts as the Nucleophile in catalysis. Residue Y111 participates in substrate binding.

Belongs to the tRNA pseudouridine synthase TruA family. In terms of assembly, homodimer.

The catalysed reaction is uridine(38/39/40) in tRNA = pseudouridine(38/39/40) in tRNA. Formation of pseudouridine at positions 38, 39 and 40 in the anticodon stem and loop of transfer RNAs. This chain is tRNA pseudouridine synthase A, found in Wolbachia pipientis subsp. Culex pipiens (strain wPip).